Here is a 124-residue protein sequence, read N- to C-terminus: V-type proton ATPase subunit F (124 aa).

This sequence belongs to the V-ATPase F subunit family. In terms of assembly, V-ATPase is a heteromultimeric enzyme composed of a peripheral catalytic V1 complex (components A to H) attached to an integral membrane V0 proton pore complex (components: a, c, c', c'', d, e, f and VOA1).

It localises to the vacuole membrane. Its function is as follows. Subunit of the V1 complex of vacuolar(H+)-ATPase (V-ATPase), a multisubunit enzyme composed of a peripheral complex (V1) that hydrolyzes ATP and a membrane integral complex (V0) that translocates protons. V-ATPase is responsible for acidifying and maintaining the pH of intracellular compartments. This Neurospora crassa (strain ATCC 24698 / 74-OR23-1A / CBS 708.71 / DSM 1257 / FGSC 987) protein is V-type proton ATPase subunit F (vma-7).